A 280-amino-acid polypeptide reads, in one-letter code: Polyamine aminopropyltransferase 2 (280 aa).

The region spanning Glu-2–Lys-237 is the PABS domain. An S-methyl-5'-thioadenosine-binding site is contributed by Gln-33. Spermidine is bound by residues His-64 and Asp-88. S-methyl-5'-thioadenosine-binding positions include Glu-108 and Asp-139–Gly-140. Residue Asp-157 is the Proton acceptor of the active site. Asp-157–Asp-160 lines the spermidine pocket. Residue Pro-164 participates in S-methyl-5'-thioadenosine binding.

Belongs to the spermidine/spermine synthase family. As to quaternary structure, homodimer or homotetramer.

It is found in the cytoplasm. The enzyme catalyses S-adenosyl 3-(methylsulfanyl)propylamine + putrescine = S-methyl-5'-thioadenosine + spermidine + H(+). It participates in amine and polyamine biosynthesis; spermidine biosynthesis; spermidine from putrescine: step 1/1. Catalyzes the irreversible transfer of a propylamine group from the amino donor S-adenosylmethioninamine (decarboxy-AdoMet) to putrescine (1,4-diaminobutane) to yield spermidine. The sequence is that of Polyamine aminopropyltransferase 2 from Leptospira interrogans serogroup Icterohaemorrhagiae serovar Lai (strain 56601).